We begin with the raw amino-acid sequence, 337 residues long: Quercetin 2,3-dioxygenase (337 aa).

Cupin type-2 domains follow at residues 55 to 110 (KGDA…MQSH) and 226 to 281 (PKGD…RLDS). The Fe cation site is built by His62, His64, Glu69, His103, His234, His236, Glu241, and His275.

As to quaternary structure, homodimer. Fe(2+) is required as a cofactor.

The catalysed reaction is quercetin + O2 = 2-(3,4-dihydroxybenzoyloxy)-4,6-dihydroxybenzoate + CO. It functions in the pathway flavonoid metabolism; quercetin degradation. Performs the first step in the degradation of the flavonoid quercetin by a dioxygenase reaction. The enzyme catalyzes the cleavage of the O-heteroaromatic ring of the flavonol quercetin yielding the depside 2-protocatechuoyl-phloroglucinol carboxylic acid and carbon monoxide. This involves the remarkable dioxygenolytic cleavage of two carbon-carbon bonds. This chain is Quercetin 2,3-dioxygenase (qdoI), found in Bacillus subtilis (strain 168).